The following is a 583-amino-acid chain: Fumarate reductase flavoprotein subunit (583 aa).

Residues 11-15 (GGGGA), 35-37 (VSK), 43-51 (SHTVSAEGG), 155-157 (WFA), and Asp211 contribute to the FAD site. His44 bears the Tele-8alpha-FAD histidine mark. Active-site residues include His232 and Arg248. FAD-binding positions include 353–354 (HY), Glu377, and 388–394 (RLGSNSL).

Belongs to the FAD-dependent oxidoreductase 2 family. FRD/SDH subfamily. In terms of assembly, part of an enzyme complex containing four subunits: a flavoprotein (FrdA), an iron-sulfur protein (FrdB), and two hydrophobic anchor proteins (FrdC and FrdD). The cofactor is FAD.

It is found in the cell membrane. It carries out the reaction a quinone + succinate = fumarate + a quinol. It catalyses the reaction a menaquinone + succinate = a menaquinol + fumarate. In Mycobacterium tuberculosis (strain CDC 1551 / Oshkosh), this protein is Fumarate reductase flavoprotein subunit (frdA).